The sequence spans 298 residues: MLDKLTTELRNEKTMNLDEMNTIEILTAMNEEDHRVPQQIAQALPAIAPLVEETIKAMKQGGRLIYVGAGTSGRLGVLDAAECPPTFGVAPDRVIGLIAGGEKAFIEAKEGAEDDEGLGEADLKKIQLTVRDVVVGIAASGRTPYVIGALKYANQVGAVTGSLACNRGAAISRIATYPIEVETGSEVLTGSTRLKAGTAQKLVLNMISTTVMIGLGKAYKNLMVDLKPTNEKLRERSKRIIMEATDVEAAVAEKHLREAGGVVKVAIITILTGCSVDQAQMTLDRNGGFIRKAVHELN.

Positions 54-217 (TIKAMKQGGR…STTVMIGLGK (164 aa)) constitute an SIS domain. The Proton donor role is filled by Glu-82. Residue Glu-113 is part of the active site.

It belongs to the GCKR-like family. MurNAc-6-P etherase subfamily. In terms of assembly, homodimer.

The catalysed reaction is N-acetyl-D-muramate 6-phosphate + H2O = N-acetyl-D-glucosamine 6-phosphate + (R)-lactate. The protein operates within amino-sugar metabolism; N-acetylmuramate degradation. In terms of biological role, specifically catalyzes the cleavage of the D-lactyl ether substituent of MurNAc 6-phosphate, producing GlcNAc 6-phosphate and D-lactate. This chain is N-acetylmuramic acid 6-phosphate etherase, found in Halalkalibacterium halodurans (strain ATCC BAA-125 / DSM 18197 / FERM 7344 / JCM 9153 / C-125) (Bacillus halodurans).